Reading from the N-terminus, the 1878-residue chain is MDLSADRVEEVQNVLNAMQKILECPICLELIKEPVSTKCDHIFCKFCMLKLLNQRKGPSQCPLCKNDITKRSLQESTRFSQLVEELLKIIHAFELDTGLQFADSYNFSKKENNSPEHLKEEVSIIQSMGYRNRAKRLRQSEPENPTLETSLSVQLSNLGIVRSLRTKQQIQPQNKSVYIELGSDSSEDTVNKASSCSVGDDELEITSQGARAEASLNPAKKAACEFSGDITNIEHHQSSNKDLTTTEKHATKKHPEKYQGISVSNLHVEPCGTNTHASSLQHENSSLLLTKHRMNVEKAEICNNSKQPGLARSQQSRWAESKETCNDRQIPSTEKKVVVNADLLCGRKELNKQKPPHSDSPRDSQDVPWITLNSSIRKVNEWFSRSDEILTSDDSHDRGSELNTEVGGAVEVPNEVGEYSGSSEKIDLMASDPQDAFICESERVHTKPVGGNIEDKIFGKTYRRKASLPKVSHTTEVLTIGACAIEPQTMQTHPFMNKAEHKRRTTSSLHPEDFIKKVELGIVPKTPEKLIEGINQIKRDGHVINITNNGPENETEGDYVQKEKNANPTESLEKESAFRTKTEPMSSRISNMELELNSSSSKAPKKNRLRRKSSARHTCALEFVVNRNLNPPDHSELQIESCSSSEEMKKQHLDQVPVRHNKTLQLMQDKEPAGRAKKSSKPGEQINKRLASHAFPELTLTNVSGFFANYSSSSKPQECINPGLRREEIEESRRMTQVSDSTRDPKELVLSGGRGLQTERSVESTSISLVLDTDYGTQDSISLLEADTLRKAKTVSNQQANLCATIENPKEPIHGCSKDTRNDTEGFVVPLTCKDNHTQETSIEMEESELDTQCLRNMFKVSKRQSFALFSYPRDPEEDCVTVCPRSGAFGKQGPKVTLECGQKEESQGKKESEIRHVQAVHTNAGFSAVSQKAKKPGDFAKCSIKGVSRLCLSSQFKGKETELLIANYHGISQNPYHIPPLSPIRSCVKTLCQENLSEEKFEQHSMSPERAVGNERVIQSTVSTISQNNIRECASKEVGSSSVNEVVSSTNEVGSSVNEVGSSGENIQAELGRNRGPKLNAMLRLGLMQPEVCKQSLSLSNCKHPEMKWQGQSEGAVLSVSADFSPCLISDNPEQPMGSSRSSQVCSETPDDLLNGDKIKGKVSFAESDIKEKSAVFSKSVQSGEFSRSPSPSDHTRLAQGYQRGTKKLESSEENMSSEEEELPCFQHLIFGKVTNMPSQSTSHNAVAAEGLSNKTEENLDSLKNSLSDISNQVPSAKASQEHHLSEEARCSGSLFSSQCSALEDLTVNTNTQDPFSMFDPTSKQVRHQSENLDVLNDKELVSDDDDEREPGLEEDSPQEEQSVDSDLGEVASGYESETSLSEDCSRLSSQSDILTTQQRDTMQDNLIKLQQEMAELEAVLEQHESQPSNSSPSLIADSCSPEDLLNPEQNASERVLTSEKSSDSPISQNPESLSTDKFQVFLDSSTSKNGEPGMIRSSPSQSRLLDTRWYVHSCPRSLQDTNCPSQKELTKVVSMEEQQPTESEARDLMEQSYLSRPDLEGAPYLESGISLFSDDPESDPSSHRASELAHVSSMPTSTSALKLPQFQVEESAKSTAAVHIASTAGYNKSEDSVGIEKPEVISSTRGVNKRISMVASGLTPKEFMLVHKFARKHHISLTNLISEETTHVIMKTDAEFVCERTLKYFLGIAGGKWVVSYFWVTQSIKERKILDEHDFEVRGDVVNGRNHQGPKRARESQDRESQDRKIFRGLEICCYGPFTNMPTDQLEWMVHLCGASVVKEPSLFTLSKGTHPVVVVQPDAWTEDSGFHAIGQMCEAPVVTREWVLDSVALYQCQELDTYLIPQIPRTAADSSQPCV.

Methionine 1 carries the post-translational modification N-acetylmethionine. The segment at cysteine 24–lysine 65 adopts an RING-type zinc-finger fold. Lysine 109 is covalently cross-linked (Glycyl lysine isopeptide (Lys-Gly) (interchain with G-Cter in SUMO2)). Phosphoserine is present on serine 114. Residue lysine 298 forms a Glycyl lysine isopeptide (Lys-Gly) (interchain with G-Cter in SUMO2) linkage. Positions asparagine 303–tryptophan 318 are enriched in polar residues. The interval asparagine 303 to glutamine 329 is disordered. A Glycyl lysine isopeptide (Lys-Gly) (interchain with G-Cter in SUMO2) cross-link involves residue lysine 336. Basic and acidic residues predominate over residues glutamate 349–glutamine 365. Positions glutamate 349–proline 368 are disordered. A phosphoserine mark is found at serine 392, serine 395, serine 420, and serine 431. Residues lysine 456, lysine 516, and lysine 581 each participate in a glycyl lysine isopeptide (Lys-Gly) (interchain with G-Cter in SUMO2) cross-link. The interval asparagine 548–serine 614 is disordered. Residues tyrosine 559 to threonine 582 are compositionally biased toward basic and acidic residues. Over residues serine 590 to serine 601 the composition is skewed to low complexity. Basic residues predominate over residues alanine 603–serine 614. 3 positions are modified to phosphoserine: serine 692, serine 712, and serine 751. Serine 987 is subject to Phosphoserine; by CHEK2. A Phosphoserine modification is found at serine 1008. A Glycyl lysine isopeptide (Lys-Gly) (interchain with G-Cter in SUMO2) cross-link involves residue lysine 1079. 2 disordered regions span residues proline 1134–leucine 1154 and glutamine 1183–glutamate 1221. 2 stretches are compositionally biased toward polar residues: residues methionine 1138–serine 1148 and glutamine 1183–serine 1194. Residues serine 1144, serine 1190, serine 1192, serine 1212, serine 1218, serine 1219, and serine 1281 each carry the phosphoserine modification. Polar residues predominate over residues aspartate 1315–lysine 1325. Disordered regions lie at residues aspartate 1315 to arginine 1401 and glutamate 1419 to serine 1504. Basic and acidic residues predominate over residues histidine 1329–valine 1343. 3 positions are modified to phosphoserine: serine 1331, serine 1344, and serine 1391. Residues serine 1344–leucine 1369 show a composition bias toward acidic residues. The span at glutamate 1377–arginine 1401 shows a compositional bias: polar residues. Position 1398 is a phosphothreonine (threonine 1398). Residues arginine 1401–glutamine 1428 form an interaction with PALB2 region. A phosphoserine mark is found at serine 1427 and serine 1460. The segment covering aspartate 1465–asparagine 1491 has biased composition (polar residues). Phosphoserine occurs at positions 1527 and 1545. The tract at residues glycine 1570 to leucine 1590 is disordered. BRCT domains are found at residues arginine 1652 to valine 1739 and glutamine 1764 to isoleucine 1863. The tract at residues valine 1743–glutamine 1764 is disordered. The span at arginine 1754 to glutamine 1764 shows a compositional bias: basic and acidic residues.

In terms of assembly, heterodimer with BARD1. Part of the BRCA1-associated genome surveillance complex (BASC), which contains BRCA1, MSH2, MSH6, MLH1, ATM, BLM, PMS2 and the MRE11-RAD50-NBN protein (MRN) complex. This association could be a dynamic process changing throughout the cell cycle and within subnuclear domains. Component of the BRCA1-A complex, at least composed of BRCA1, BARD1, UIMC1/RAP80, ABRAXAS1, BRCC3/BRCC36, BABAM2 and BABAM1/NBA1. Interacts (via the BRCT domains) with ABRAXAS1 (phosphorylated form); this is important for recruitment to sites of DNA damage. Can form a heterotetramer with two molecules of ABRAXAS1 (phosphorylated form). Component of the BRCA1-RBBP8 complex. Interacts (via the BRCT domains) with RBBP8 ('Ser-327' phosphorylated form); the interaction ubiquitinates RBBP8, regulates CHEK1 activation, and involves RBBP8 in BRCA1-dependent G2/M checkpoint control on DNA damage. Associates with RNA polymerase II holoenzyme. Interacts with SMC1A, NELFB, DCLRE1C, CLSPN. CHEK1, CHEK2, BAP1, BRCC3, UBXN1 and PCLAF. Interacts (via BRCT domains) with BRIP1 (phosphorylated form). Interacts with FANCD2 (ubiquitinated form). Interacts with H2AX (phosphorylated on 'Ser-140'). Interacts (via the BRCT domains) with ACACA (phosphorylated form); the interaction prevents dephosphorylation of ACACA. Part of a BRCA complex containing BRCA1, BRCA2 and PALB2. Interacts directly with PALB2; the interaction is essential for its function in HRR. Interacts directly with BRCA2; the interaction occurs only in the presence of PALB2 which serves as the bridging protein. Interacts (via the BRCT domains) with LMO4; the interaction represses the transcriptional activity of BRCA1. Interacts (via the BRCT domains) with CCAR2 (via N-terminus); the interaction represses the transcriptional activator activity of BRCA1. Interacts with EXD2. Interacts (via C-terminus) with DHX9; this interaction is direct and links BRCA1 to the RNA polymerase II holoenzyme. Interacts with DNA helicase ZGRF1; the interaction is increased following DNA damage induction. Phosphorylated in response to IR, UV, and various stimuli that cause checkpoint activation, probably by ATM or ATR. Phosphorylation at Ser-987 by CHEK2 regulates mitotic spindle assembly. Phosphorylation by AURKA regulates centrosomal microtubule nucleation. In terms of processing, autoubiquitinated, undergoes 'Lys-6'-linked polyubiquitination. 'Lys-6'-linked polyubiquitination does not promote degradation.

The protein resides in the nucleus. It localises to the chromosome. The protein localises to the cytoplasm. The enzyme catalyses S-ubiquitinyl-[E2 ubiquitin-conjugating enzyme]-L-cysteine + [acceptor protein]-L-lysine = [E2 ubiquitin-conjugating enzyme]-L-cysteine + N(6)-ubiquitinyl-[acceptor protein]-L-lysine.. The protein operates within protein modification; protein ubiquitination. Functionally, E3 ubiquitin-protein ligase that specifically mediates the formation of 'Lys-6'-linked polyubiquitin chains and plays a central role in DNA repair by facilitating cellular responses to DNA damage. It is unclear whether it also mediates the formation of other types of polyubiquitin chains. The BRCA1-BARD1 heterodimer coordinates a diverse range of cellular pathways such as DNA damage repair, ubiquitination and transcriptional regulation to maintain genomic stability. Regulates centrosomal microtubule nucleation. Required for appropriate cell cycle arrests after ionizing irradiation in both the S-phase and the G2 phase of the cell cycle. Required for FANCD2 targeting to sites of DNA damage. Inhibits lipid synthesis by binding to inactive phosphorylated ACACA and preventing its dephosphorylation. Contributes to homologous recombination repair (HRR) via its direct interaction with PALB2, fine-tunes recombinational repair partly through its modulatory role in the PALB2-dependent loading of BRCA2-RAD51 repair machinery at DNA breaks. Component of the BRCA1-RBBP8 complex which regulates CHEK1 activation and controls cell cycle G2/M checkpoints on DNA damage via BRCA1-mediated ubiquitination of RBBP8. Acts as a transcriptional activator. The sequence is that of Breast cancer type 1 susceptibility protein homolog (BRCA1) from Canis lupus familiaris (Dog).